The following is a 302-amino-acid chain: MKRPDYRTLQALDAVIRERGFERAAQKLCITQSAVSQRIKQLENLFGQPLLVRTVPPRPTEQGQKLLALLHQVELLEEEWLGNDNGVDTPLLLSLAVNADSLATWLLPALKPVLADLPIRLNLQVEDETRTQERLRRGEVVGAVSIQPQPLPSCLVDQLGALDYLFVASKAFAERYFPNGVTRSALLKAPAVAFDHLDDMHQAFLQQNFDLSPGSVPCHIVNSSEAFVQLARQGTTCCMIPHLQIEKELASGELIDLTPGLLQRRMLFWHRFAPESRTMRKVTDALLSYGRQVLRQDSFIGQ.

Residues 4–60 enclose the HTH lysR-type domain; the sequence is PDYRTLQALDAVIRERGFERAAQKLCITQSAVSQRIKQLENLFGQPLLVRTVPPRPT. Positions 21 to 40 form a DNA-binding region, H-T-H motif; it reads FERAAQKLCITQSAVSQRIK.

Belongs to the LysR transcriptional regulatory family. As to quaternary structure, homodimer.

In terms of biological role, controls the transcription of genes involved in arginine and lysine metabolism. In Yersinia pseudotuberculosis serotype O:1b (strain IP 31758), this protein is HTH-type transcriptional regulator ArgP.